The sequence spans 345 residues: Phosphoribosylformylglycinamidine cyclo-ligase (345 aa).

This sequence belongs to the AIR synthase family.

It is found in the cytoplasm. The catalysed reaction is 2-formamido-N(1)-(5-O-phospho-beta-D-ribosyl)acetamidine + ATP = 5-amino-1-(5-phospho-beta-D-ribosyl)imidazole + ADP + phosphate + H(+). It participates in purine metabolism; IMP biosynthesis via de novo pathway; 5-amino-1-(5-phospho-D-ribosyl)imidazole from N(2)-formyl-N(1)-(5-phospho-D-ribosyl)glycinamide: step 2/2. In Ligilactobacillus salivarius (strain UCC118) (Lactobacillus salivarius), this protein is Phosphoribosylformylglycinamidine cyclo-ligase.